A 314-amino-acid chain; its full sequence is Homoserine kinase (314 aa).

An ATP-binding site is contributed by 95–105; the sequence is PHSRGLGSSAA.

This sequence belongs to the GHMP kinase family. Homoserine kinase subfamily.

It localises to the cytoplasm. It carries out the reaction L-homoserine + ATP = O-phospho-L-homoserine + ADP + H(+). Its pathway is amino-acid biosynthesis; L-threonine biosynthesis; L-threonine from L-aspartate: step 4/5. Its function is as follows. Catalyzes the ATP-dependent phosphorylation of L-homoserine to L-homoserine phosphate. The chain is Homoserine kinase from Mycolicibacterium vanbaalenii (strain DSM 7251 / JCM 13017 / BCRC 16820 / KCTC 9966 / NRRL B-24157 / PYR-1) (Mycobacterium vanbaalenii).